A 296-amino-acid polypeptide reads, in one-letter code: uncharacterized protein (296 aa).

This is an uncharacterized protein from Magallana gigas (Pacific oyster).